Consider the following 105-residue polypeptide: Ferredoxin (105 aa).

Residues Cys-8 and Cys-16 each coordinate [3Fe-4S] cluster. 4 residues coordinate [4Fe-4S] cluster: Cys-20, Cys-39, Cys-42, and Cys-45. Residues Arg-30–Asp-59 form the 4Fe-4S ferredoxin-type domain. Cys-49 contributes to the [3Fe-4S] cluster binding site.

The cofactor is [4Fe-4S] cluster. Requires [3Fe-4S] cluster as cofactor.

Its function is as follows. Ferredoxins are iron-sulfur proteins that transfer electrons in a wide variety of metabolic reactions. Putative electron transport protein for the cytochrome P-450SOY system from the same organism. In Streptomyces griseus, this protein is Ferredoxin.